The chain runs to 301 residues: 4-hydroxy-tetrahydrodipicolinate synthase (301 aa).

Thr50 lines the pyruvate pocket. Tyr138 (proton donor/acceptor) is an active-site residue. The active-site Schiff-base intermediate with substrate is the Lys167. Ile209 contacts pyruvate.

This sequence belongs to the DapA family. As to quaternary structure, homotetramer; dimer of dimers.

It is found in the cytoplasm. It catalyses the reaction L-aspartate 4-semialdehyde + pyruvate = (2S,4S)-4-hydroxy-2,3,4,5-tetrahydrodipicolinate + H2O + H(+). The protein operates within amino-acid biosynthesis; L-lysine biosynthesis via DAP pathway; (S)-tetrahydrodipicolinate from L-aspartate: step 3/4. Functionally, catalyzes the condensation of (S)-aspartate-beta-semialdehyde [(S)-ASA] and pyruvate to 4-hydroxy-tetrahydrodipicolinate (HTPA). The chain is 4-hydroxy-tetrahydrodipicolinate synthase from Sorangium cellulosum (strain So ce56) (Polyangium cellulosum (strain So ce56)).